Here is a 659-residue protein sequence, read N- to C-terminus: Exoribonuclease 2 (659 aa).

An RNB domain is found at 189–531 (RENLTALHFV…NHRLIKAVLA (343 aa)). One can recognise an S1 motif domain in the interval 576 to 658 (NVEFNAEVQD…ATRSIVGEIL (83 aa)).

The protein belongs to the RNR ribonuclease family. RNase II subfamily.

It is found in the cytoplasm. It carries out the reaction Exonucleolytic cleavage in the 3'- to 5'-direction to yield nucleoside 5'-phosphates.. In terms of biological role, involved in mRNA degradation. Hydrolyzes single-stranded polyribonucleotides processively in the 3' to 5' direction. This Haemophilus influenzae (strain 86-028NP) protein is Exoribonuclease 2.